Here is a 2313-residue protein sequence, read N- to C-terminus: Voltage-dependent R-type calcium channel subunit alpha-1E (2313 aa).

The tract at residues 1–38 (MARFGEAVVARPGSGDGDSDQSRNRQGTPVPASGQAAA) is disordered. Topologically, residues 1-89 (MARFGEAVVA…KYAKKLIDWP (89 aa)) are cytoplasmic. Phosphoserine is present on residues Ser-14 and Ser-19. One copy of the I repeat lies at 76-354 (NIVRKYAKKL…LVLGVLSGEF (279 aa)). Residues 90-108 (PFEYMILATIIANCIVLAL) traverse the membrane as a helical segment. The Extracellular segment spans residues 109–127 (EQHLPEDDKTPMSRRLEKT). The chain crosses the membrane as a helical span at residues 128 to 146 (EPYFIGIFCFEAGIKIVAL). At 147–158 (GFIFHKGSYLRN) the chain is on the cytoplasmic side. A helical membrane pass occupies residues 159-173 (GWNVMDFIVVLSGIL). The Extracellular portion of the chain corresponds to 174–185 (ATAGTHFNTHVD). The chain crosses the membrane as a helical span at residues 186 to 205 (LRTLRAVRVLRPLKLVSGIP). Topologically, residues 206–223 (SLQIVLKSIMKAMVPLLQ) are cytoplasmic. A helical membrane pass occupies residues 224–244 (IGLLLFFAILMFAIIGLEFYS). At 245 to 326 (GKLHRACFMN…NTNDALGATW (82 aa)) the chain is on the extracellular side. An N-linked (GlcNAc...) asparagine glycan is attached at Asn-254. A helical membrane pass occupies residues 327–350 (NWLYFIPLIIIGSFFVLNLVLGVL). Residues 351–476 (SGEFAKERER…ISIRHMVKSQ (126 aa)) lie on the Cytoplasmic side of the membrane. The interval 374 to 391 (QQIERELNGYRAWIDKAE) is binding to the beta subunit. Residue Asp-426 participates in Ca(2+) binding. Ser-427 bears the Phosphoserine mark. The Ca(2+) site is built by Ser-428, Glu-430, and Cys-432. Phosphothreonine is present on Thr-440. The II repeat unit spans residues 462 to 706 (ERLLRISIRH…VFLAIAVDNL (245 aa)). Residues 477–496 (VFYWIVLSLVALNTACVAIV) traverse the membrane as a helical segment. At 497–509 (HHNQPQWLTHLLY) the chain is on the extracellular side. The helical transmembrane segment at 510-529 (YAEFLFLGLFLLEMSLKMYG) threads the bilayer. Residues 530–538 (MGPRLYFHS) are Cytoplasmic-facing. The helical transmembrane segment at 539 to 557 (SFNCFDFGVTVGSIFEVVW) threads the bilayer. Residues 558-567 (AIFRPGTSFG) are Extracellular-facing. The helical transmembrane segment at 568 to 586 (ISVLRALRLLRIFKITKYW) threads the bilayer. The Cytoplasmic portion of the chain corresponds to 587–605 (ASLRNLVVSLMSSMKSIIS). A helical transmembrane segment spans residues 606 to 625 (LLFLLFLFIVVFALLGMQLF). Residues 626–678 (GGRFNFNDGTPSANFDTFPAAIMTVFQILTGEDWNEVMYNGIRSQGGVSSGMW) lie on the Extracellular side of the membrane. A helical membrane pass occupies residues 679-703 (SAIYFIVLTLFGNYTLLNVFLAIAV). The Cytoplasmic portion of the chain corresponds to 704–1148 (DNLANAQELT…TNPIRRACHY (445 aa)). Positions 729–774 (LQKAKEVSPMSAPNMPSIERDRRRRHHMSMWEPRSSHLRERRRRHH) are disordered. A phosphoserine mark is found at Ser-736, Ser-745, Ser-793, Ser-815, and Ser-855. The segment at 851 to 984 (SRGGSLKGDG…EERAQDLRRT (134 aa)) is disordered. Over residues 866–875 (ALDNQRTPLS) the composition is skewed to polar residues. Positions 913–926 (RHRQSQRRSRHRRV) are enriched in basic residues. Residues 933–945 (SSSASRSRSASQE) show a composition bias toward low complexity. The residue at position 947 (Ser-947) is a Phosphoserine. Over residues 955–983 (EGEKDHELRGNHGAKEPTIQEERAQDLRR) the composition is skewed to basic and acidic residues. Residue Ser-1097 is modified to Phosphoserine. The tract at residues 1103–1125 (EIREDEEEVEKKKQKKEKRETGK) is disordered. The stretch at 1140–1426 (NPIRRACHYI…IFVALIIITF (287 aa)) is one III repeat. A helical membrane pass occupies residues 1149–1165 (IVNLRYFEMCILLVIAA). Topologically, residues 1166 to 1189 (SSIALAAEDPVLTNSERNKVLRYF) are extracellular. Residues 1190 to 1209 (DYVFTGVFTFEMVIKMIDQG) traverse the membrane as a helical segment. Topologically, residues 1210–1217 (LILQDGSY) are cytoplasmic. A helical transmembrane segment spans residues 1218–1240 (FRDLWNILDFVVVVGALVAFALA). Over 1241 to 1254 (NALGTNKGRDIKTI) the chain is Extracellular. Residues 1255-1272 (KSLRVLRVLRPLKTIKRL) traverse the membrane as a helical segment. Residues 1273-1291 (PKLKAVFDCVVTSLKNVFN) are Cytoplasmic-facing. The helical transmembrane segment at 1292 to 1311 (ILIVYKLFMFIFAVIAVQLF) threads the bilayer. At 1312–1398 (KGKFFYCTDS…RGPSRSNRME (87 aa)) the chain is on the extracellular side. Residues 1399–1422 (MSIFYVVYFVVFPFFFVNIFVALI) traverse the membrane as a helical segment. At 1423-1479 (IITFQEQGDKMMEECSLEKNERACIDFAISAKPLTRYMPQNRHTFQYRVWHFVVSPS) the chain is on the cytoplasmic side. One copy of the IV repeat lies at 1463 to 1726 (NRHTFQYRVW…LFVAVIMDNF (264 aa)). The chain crosses the membrane as a helical span at residues 1480-1498 (FEYTIMAMIALNTVVLMMK). Over 1499 to 1513 (YYSAPCTYELALKYL) the chain is Extracellular. Residues 1514 to 1533 (NIAFTMVFSLECVLKVIAFG) form a helical membrane-spanning segment. The Cytoplasmic segment spans residues 1534–1541 (FLNYFRDT). The chain crosses the membrane as a helical span at residues 1542–1560 (WNIFDFITVIGSITEIILT). The Extracellular segment spans residues 1561–1571 (DSKLVNTSGFN). N-linked (GlcNAc...) asparagine glycosylation is found at Asn-1566 and Asn-1571. A helical membrane pass occupies residues 1572–1590 (MSFLKLFRAARLIKLLRQG). Topologically, residues 1591–1609 (YTIRILLWTFVQSFKALPY) are cytoplasmic. The chain crosses the membrane as a helical span at residues 1610–1629 (VCLLIAMLFFIYAIIGMQVF). Topologically, residues 1630-1698 (GNIKLDEESH…NENERCGTDL (69 aa)) are extracellular. The helical transmembrane segment at 1699 to 1724 (AYVYFVSFIFFCSFLMLNLFVAVIMD) threads the bilayer. Topologically, residues 1725–2313 (NFEYLTRDSS…LSDTEEDDKC (589 aa)) are cytoplasmic. In terms of domain architecture, EF-hand spans 1739–1774 (HHLDEFVRVWAEYDRAACGRIHYTEMYEMLTLMSPP). Ca(2+) is bound by residues Asp-1752, Arg-1758, and Glu-1763. Disordered stretches follow at residues 1970 to 2170 (VSEL…RPLL), 2206 to 2225 (CLTE…ASPQ), and 2263 to 2295 (SNTI…GPGM). A compositionally biased stretch (polar residues) spans 2012–2023 (TDPSSMRRSFST). The segment covering 2055–2064 (HSSLRLSAHR) has biased composition (low complexity). The segment covering 2065-2085 (LNSDSGHKSDTHRSGGRERGR) has biased composition (basic and acidic residues). A phosphoserine mark is found at Ser-2094 and Ser-2113. The span at 2101–2118 (NSEERGTQADWESPERRQ) shows a compositional bias: basic and acidic residues. Positions 2129–2152 (TPNRQGTGSLSESSIPSVSDTSTP) are enriched in polar residues. Positions 2210-2225 (SSNSPHPQQSQHASPQ) are enriched in low complexity.

The protein belongs to the calcium channel alpha-1 subunit (TC 1.A.1.11) family. CACNA1E subfamily. Interacts with EFHC1. Voltage-dependent calcium channels are multisubunit complexes, consisting of alpha-1, alpha-2, beta and delta subunits in a 1:1:1:1 ratio. The channel activity is directed by the pore-forming and voltage-sensitive alpha-1 subunit. In many cases, this subunit is sufficient to generate voltage-sensitive calcium channel activity. The auxiliary subunits beta and alpha-2/delta linked by a disulfide bridge regulate the channel activity. In terms of tissue distribution, expressed in neuronal tissues and in kidney.

The protein resides in the membrane. The catalysed reaction is Ca(2+)(in) = Ca(2+)(out). Its function is as follows. Voltage-sensitive calcium channels (VSCC) mediate the entry of calcium ions into excitable cells. They are also involved in a variety of calcium-dependent processes, including muscle contraction, hormone or neurotransmitter release, gene expression, cell motility, cell division and cell death. The isoform alpha-1E gives rise to R-type calcium currents. R-type calcium channels belong to the 'high-voltage activated' (HVA) group and are blocked by nickel. They are however insensitive to dihydropyridines (DHP). Calcium channels containing alpha-1E subunit could be involved in the modulation of firing patterns of neurons which is important for information processing. Functionally, voltage-sensitive calcium channels (VSCC) mediate the entry of calcium ions into excitable cells. They are also involved in a variety of calcium-dependent processes, including muscle contraction, hormone or neurotransmitter release, gene expression, cell motility, cell division and cell death. The isoform alpha-1E gives rise to R-type calcium currents. In Homo sapiens (Human), this protein is Voltage-dependent R-type calcium channel subunit alpha-1E (CACNA1E).